Consider the following 434-residue polypeptide: Tol-Pal system protein TolB (434 aa).

Positions 1-21 (MTVRRALALAALALAVSPALA) are cleaved as a signal peptide. Positions 411–434 (GDRQTPVTSGKTDLAAPAWGPLAP) are disordered.

It belongs to the TolB family. In terms of assembly, the Tol-Pal system is composed of five core proteins: the inner membrane proteins TolA, TolQ and TolR, the periplasmic protein TolB and the outer membrane protein Pal. They form a network linking the inner and outer membranes and the peptidoglycan layer.

Its subcellular location is the periplasm. Functionally, part of the Tol-Pal system, which plays a role in outer membrane invagination during cell division and is important for maintaining outer membrane integrity. This chain is Tol-Pal system protein TolB, found in Anaeromyxobacter dehalogenans (strain 2CP-1 / ATCC BAA-258).